We begin with the raw amino-acid sequence, 636 residues long: Leucine-rich repeat and fibronectin type-III domain-containing protein 4 (636 aa).

Positions 1-16 (MAPPLLLLLLASGAAA) are cleaved as a signal peptide. Positions 17–48 (CPLPCVCQNLSESLSTLCAHRGLLFVPPNVDR) constitute an LRRNT domain. Topologically, residues 17–518 (CPLPCVCQNL…LQAHVLGGTL (502 aa)) are extracellular. Asn25 carries N-linked (GlcNAc...) asparagine glycosylation. 7 LRR repeats span residues 49-70 (RTVELRLADNFIQALGPPDFRN), 73-94 (GLVDLTLSRNAITRIGARSFGD), 97-118 (SLRSLHLDGNRLVELGSSSLRG), 121-142 (NLQHLILSGNQLGRIAPGAFDD), 146-169 (SLEDLDVSYNNLRQVPWAGIGSMP), 170-191 (ALHTLNLDHNLIDALPPGVFAQ), and 194-215 (QLSRLDLTSNRLATLAPDPLFS). One can recognise an LRRCT domain in the interval 234 to 280 (NPLHCNCELLWLRRLARPDDLETCASPPTLAGRYFWAVPEGEFSCEP). The Ig-like domain maps to 281 to 367 (PLIARHTQRL…GEATARVELR (87 aa)). Cys302 and Cys351 form a disulfide bridge. Asn333 carries an N-linked (GlcNAc...) asparagine glycan. Residues 405–502 (SEPAVQVTEV…GCAHFSTLPA (98 aa)) form the Fibronectin type-III domain. Residues 519–539 (TVAVGGVLVAALLVFTVALLV) form a helical membrane-spanning segment. At 540–636 (RGRGAGNGRL…SAERLEESVV (97 aa)) the chain is on the cytoplasmic side. Residues 556 to 585 (VQSQTNGGTSPMPKSHPPRSPPPRPQRSCS) form a disordered region. Residues 569-580 (KSHPPRSPPPRP) are compositionally biased toward pro residues. Phosphoserine is present on residues Ser585 and Ser627. The short motif at 633 to 636 (ESVV) is the PDZ-binding element.

The protein belongs to the LRFN family. In terms of assembly, forms heteromeric complexes with LRFN1 and LRFN2. Can form heteromeric complexes with LRFN3 and LRFN5. Unable to form homophilic interactions across cell junctions. Interacts with DLG1, DLG2, DLG3 and DLG4. Glycosylated.

The protein resides in the membrane. Functionally, promotes neurite outgrowth in hippocampal neurons. May play a role in redistributing DLG4 to the cell periphery. This Rattus norvegicus (Rat) protein is Leucine-rich repeat and fibronectin type-III domain-containing protein 4 (Lrfn4).